Here is a 414-residue protein sequence, read N- to C-terminus: Alanine--glyoxylate aminotransferase (414 aa).

Residues 1–23 (MFRALARASATLGPQVAGWARTM) constitute a mitochondrion transit peptide. Lys-231 carries the N6-(pyridoxal phosphate)lysine modification. Lys-247 carries the N6-acetyllysine; alternate modification. At Lys-247 the chain carries N6-succinyllysine; alternate. Residues Lys-256 and Lys-334 each carry the N6-acetyllysine modification. Arg-382 serves as a coordination point for substrate. A Microbody targeting signal motif is present at residues 412–414 (NKL).

Belongs to the class-V pyridoxal-phosphate-dependent aminotransferase family. In terms of assembly, homodimer. Pyridoxal 5'-phosphate is required as a cofactor.

It is found in the peroxisome. Its subcellular location is the mitochondrion matrix. The catalysed reaction is L-serine + pyruvate = 3-hydroxypyruvate + L-alanine. The enzyme catalyses glyoxylate + L-alanine = glycine + pyruvate. Its function is as follows. Catalyzes the transamination of glyoxylate to glycine and contributes to the glyoxylate detoxification. Catalyzes the transamination between L-serine and pyruvate and contributes to gluconeogenesis from the L-serine metabolism. The chain is Alanine--glyoxylate aminotransferase from Felis catus (Cat).